The following is a 223-amino-acid chain: Transcriptional regulatory protein PhoP (223 aa).

The Response regulatory domain occupies 2–116; that stretch reads RVLVVEDNAL…EVMARMQALM (115 aa). Residue Asp51 is modified to 4-aspartylphosphate. A DNA-binding region (ompR/PhoB-type) is located at residues 124 to 222; the sequence is SQVISLPPFQ…VRGQGYLFEL (99 aa).

Monomer in the inactive, unphosphorylated state and dimer in the active, phosphorylated state. Phosphorylated by PhoQ.

It is found in the cytoplasm. With respect to regulation, feedback inhibited by MgrB, which seems to bind PhoQ, altering its activity and that of downstream effector PhoP. PhoP-regulated transcription is redox-sensitive, being activated when the periplasm becomes more reducing (deletion of dsbA/dsbB, or treatment with dithiothreitol). MgrB acts between DsbA/DsbB and PhoP/PhoQ in this pathway. Member of the two-component regulatory system PhoP/PhoQ involved in adaptation to low Mg(2+) environments and the control of acid resistance genes. In low periplasmic Mg(2+), PhoQ phosphorylates PhoP, resulting in the expression of PhoP-activated genes (PAG) and repression of PhoP-repressed genes (PRG). In high periplasmic Mg(2+), PhoQ dephosphorylates phospho-PhoP, resulting in the repression of PAG and may lead to expression of some PRG. Mediates magnesium influx to the cytosol by activation of MgtA. Promotes expression of the two-component regulatory system rstA/rstB and transcription of the hemL, mgrB, nagA, slyB, vboR and yrbL genes. The chain is Transcriptional regulatory protein PhoP (phoP) from Escherichia coli (strain K12).